A 504-amino-acid chain; its full sequence is Pyruvate kinase (504 aa).

A substrate-binding site is contributed by Arg-53. Asn-55, Ser-57, Asp-88, and Thr-89 together coordinate K(+). An ATP-binding site is contributed by 55–58; sequence NFSH. Residues Arg-95 and Lys-181 each contribute to the ATP site. Residue Glu-246 participates in Mg(2+) binding. Substrate is bound by residues Gly-269, Asp-270, and Thr-302. Mg(2+) is bound at residue Asp-270.

The protein belongs to the pyruvate kinase family. In terms of assembly, homotetramer. It depends on Mg(2+) as a cofactor. K(+) is required as a cofactor.

It localises to the cytoplasm. The enzyme catalyses pyruvate + ATP = phosphoenolpyruvate + ADP + H(+). It participates in carbohydrate degradation; glycolysis; pyruvate from D-glyceraldehyde 3-phosphate: step 5/5. The protein is Pyruvate kinase (CDC19) of Candida albicans (strain SC5314 / ATCC MYA-2876) (Yeast).